Reading from the N-terminus, the 200-residue chain is Probable GTP-binding protein EngB (200 aa).

The region spanning 23–197 (KNSEVVFIGR…RERVLKDVLG (175 aa)) is the EngB-type G domain. Residues 31 to 38 (GRSNVGKS), 58 to 62 (GKTQL), 83 to 86 (DLPG), 153 to 156 (TKMD), and 175 to 177 (FTA) each bind GTP. The Mg(2+) site is built by serine 38 and threonine 60.

It belongs to the TRAFAC class TrmE-Era-EngA-EngB-Septin-like GTPase superfamily. EngB GTPase family. The cofactor is Mg(2+).

Functionally, necessary for normal cell division and for the maintenance of normal septation. This Wolinella succinogenes (strain ATCC 29543 / DSM 1740 / CCUG 13145 / JCM 31913 / LMG 7466 / NCTC 11488 / FDC 602W) (Vibrio succinogenes) protein is Probable GTP-binding protein EngB.